A 321-amino-acid polypeptide reads, in one-letter code: uncharacterized protein (321 aa).

The protein belongs to the carbohydrate kinase PfkB family.

This is an uncharacterized protein from Escherichia coli (strain K12).